A 495-amino-acid polypeptide reads, in one-letter code: Histidine--tRNA ligase (495 aa).

Polar residues predominate over residues 1 to 10; the sequence is MTTDSEQPNT. The interval 1 to 24 is disordered; it reads MTTDSEQPNTDFRPEARAPRGFAD. A compositionally biased stretch (basic and acidic residues) spans 12-24; that stretch reads FRPEARAPRGFAD.

The protein belongs to the class-II aminoacyl-tRNA synthetase family. In terms of assembly, homodimer.

It localises to the cytoplasm. The catalysed reaction is tRNA(His) + L-histidine + ATP = L-histidyl-tRNA(His) + AMP + diphosphate + H(+). The chain is Histidine--tRNA ligase (hisS) from Caulobacter vibrioides (strain ATCC 19089 / CIP 103742 / CB 15) (Caulobacter crescentus).